The following is a 612-amino-acid chain: UvrABC system protein C (612 aa).

Residues 21-99 (KLPGVYQMYD…IKSQKPPFNI (79 aa)) form the GIY-YIG domain. The 36-residue stretch at 209–244 (EVLQQELQVEMEQASQALDFERAVVVRDQITDLRQV) folds into the UVR domain.

Belongs to the UvrC family. Interacts with UvrB in an incision complex.

The protein resides in the cytoplasm. Its function is as follows. The UvrABC repair system catalyzes the recognition and processing of DNA lesions. UvrC both incises the 5' and 3' sides of the lesion. The N-terminal half is responsible for the 3' incision and the C-terminal half is responsible for the 5' incision. The protein is UvrABC system protein C of Saccharophagus degradans (strain 2-40 / ATCC 43961 / DSM 17024).